Here is a 687-residue protein sequence, read N- to C-terminus: A-kinase anchor protein 8 (687 aa).

The interaction with MCM2 stretch occupies residues 1–195 (MEQGYGGYGA…FLRGRGQGRF (195 aa)). An interaction with DPY30 region spans residues 1–210 (MEQGYGGYGA…SSTFIRSDPF (210 aa)). The residue at position 72 (Ser72) is a Phosphoserine. Disordered stretches follow at residues 105 to 124 (KEGG…DRDS) and 185 to 218 (GFLR…ASEP). At Arg109 the chain carries Asymmetric dimethylarginine; alternate. Arg109 is modified (omega-N-methylarginine; alternate). Positions 109–118 (RGGISSGGEG) are enriched in gly residues. Positions 109 to 201 (RGGISSGGEG…QGRFQDRSNS (93 aa)) are interaction with DDX5. The residue at position 199 (Ser199) is a Phosphoserine. 2 positions are modified to omega-N-methylarginine: Arg232 and Arg276. The disordered stretch occupies residues 277 to 379 (SQTRIRDWPR…KQRRRDRMRD (103 aa)). Composition is skewed to basic and acidic residues over residues 280 to 294 (RIRD…ERFG) and 311 to 320 (PDAKLARADS). Residues 286–303 (RRRGFERFGPDNMGRKRK) carry the Bipartite nuclear localization signal motif. Residue Lys314 forms a Glycyl lysine isopeptide (Lys-Gly) (interchain with G-Cter in SUMO2) linkage. Phosphoserine occurs at positions 320, 325, and 336. The span at 321-331 (DGDLSENDDGA) shows a compositional bias: acidic residues. Residues 335–357 (RSGDEEFRGEDDLCDSRKQRGEK) show a composition bias toward basic and acidic residues. The involved in chromatin-binding stretch occupies residues 384–447 (RIQFACSVCK…NKKIEKRRQE (64 aa)). 2 C2H2 AKAP95-type zinc fingers span residues 389-411 (CSVC…SKFH) and 478-501 (CLAC…SVDH). Residues 522–565 (SVLNNKHIVKMLEKYLKGEDPFVNETADLETEGDENVGEEKEET) form an involved in condensin complex recruitment region. At Thr552 the chain carries Phosphothreonine. The segment at 568-585 (EVAAEVLAEVITAAVKAV) is RII-binding. The tract at residues 572-589 (EVLAEVITAAVKAVEGEG) is required for interaction with MYCBP. Positions 624 to 659 (QTCEAASETRSIEDKTRGEAAEARNEAAMPTADAGS) are disordered. A compositionally biased stretch (basic and acidic residues) spans 633-648 (RSIEDKTRGEAAEARN). Ser659 carries the post-translational modification Phosphoserine.

This sequence belongs to the AKAP95 family. Binds to the PKA RII-alpha regulatory subunit PRKAR2A. Interacts (via C-terminus) with FIGN. Interacts with NCAPD2, CCND3, CCNE1, MCM2, RPS6KA1, DDX5, PDE4A. Interacts with MYCBP; MYCBP is translocated to the nucleus and the interaction prevents the association of the PKA catalytic subunit leading to suppression of PKA activity. Interacts with CCND1, CASP3. Interacts with NFKB1; detetcted in the cytoplasm. Interacts with DPY30; mediating AKAP8 association with at least the MLL4/WBP7 HMT complex. Interacts with HDAC3; increased during mitosis. Interacts with GJA1; in the nucleus and in the nuclear membrane; the nuclear association increases with progress of cell cycle G1, S and G2 phase and decreases in M phase. In terms of processing, phosphorylated on tyrosine residues probably by SRC subfamily protein kinases; multiple phosphorylation is leading to dissociation from nuclear structures implicated in chromatin structural changes.

It localises to the nucleus matrix. The protein resides in the nucleus. The protein localises to the nucleolus. Its subcellular location is the cytoplasm. In terms of biological role, anchoring protein that mediates the subcellular compartmentation of cAMP-dependent protein kinase (PKA type II). Acts as an anchor for a PKA-signaling complex onto mitotic chromosomes, which is required for maintenance of chromosomes in a condensed form throughout mitosis. Recruits condensin complex subunit NCAPD2 to chromosomes required for chromatin condensation; the function appears to be independent from PKA-anchoring. Specifically involved in recruitment of CAPD2 to, and condensation of maternal but not paternal chromosomes. May help to deliver cyclin D/E to CDK4 to facilitate cell cycle progression. Required for cell cycle G2/M transition and histone deacetylation during mitosis. In mitotic cells recruits HDAC3 to the vicinity of chromatin leading to deacetylation and subsequent phosphorylation at 'Ser-10' of histone H3; in this function may act redundantly with AKAP8L. Involved in nuclear retention of RPS6KA1 upon ERK activation thus inducing cell proliferation. May be involved in regulation of DNA replication by acting as scaffold for MCM2. Enhances HMT activity of the KMT2 family MLL4/WBP7 complex and is involved in transcriptional regulation. In a teratocarcinoma cell line is involved in retinoic acid-mediated induction of developmental genes implicating H3 'Lys-4' methylation. May be involved in recruitment of active CASP3 to the nucleus in apoptotic cells. May act as a carrier protein of GJA1 for its transport to the nucleus. May play a repressive role in the regulation of rDNA transcription. Preferentially binds GC-rich DNA in vitro. In cells, associates with ribosomal RNA (rRNA) chromatin, preferentially with rRNA promoter and transcribed regions. Involved in modulation of Toll-like receptor signaling. Required for the cAMP-dependent suppression of TNF-alpha in early stages of LPS-induced macrophage activation; the function probably implicates targeting of PKA to NFKB1. This chain is A-kinase anchor protein 8 (Akap8), found in Mus musculus (Mouse).